The primary structure comprises 277 residues: 3-methyl-2-oxobutanoate hydroxymethyltransferase (277 aa).

Positions 43 and 82 each coordinate Mg(2+). 3-methyl-2-oxobutanoate-binding positions include Asp43–Ser44, Asp82, and Lys112. Glu114 contributes to the Mg(2+) binding site. The Proton acceptor role is filled by Glu181.

The protein belongs to the PanB family. Homodecamer; pentamer of dimers. The cofactor is Mg(2+).

Its subcellular location is the cytoplasm. The enzyme catalyses 3-methyl-2-oxobutanoate + (6R)-5,10-methylene-5,6,7,8-tetrahydrofolate + H2O = 2-dehydropantoate + (6S)-5,6,7,8-tetrahydrofolate. It functions in the pathway cofactor biosynthesis; (R)-pantothenate biosynthesis; (R)-pantoate from 3-methyl-2-oxobutanoate: step 1/2. Catalyzes the reversible reaction in which hydroxymethyl group from 5,10-methylenetetrahydrofolate is transferred onto alpha-ketoisovalerate to form ketopantoate. The protein is 3-methyl-2-oxobutanoate hydroxymethyltransferase of Bacillus velezensis (strain DSM 23117 / BGSC 10A6 / LMG 26770 / FZB42) (Bacillus amyloliquefaciens subsp. plantarum).